A 321-amino-acid chain; its full sequence is MSYHKSSGTTLMVPLFMLLISVNYFMSCNAQLSTTFYDTTCPTALSTIRTSIRSSVSSNRRNAALVIRLLFHDCFVQGCDASLLLSGAGSERASPANDGVLGYEVIDAAKAAVERVCPGVVSCADILAVAARDASVAVGGPSWTVRLGRRDSTTSNAAQAATDLPRGNMVLSQLISNFANKGLNTREMVALSGSHTLGQARCIRFRGRIYNSTLRIEPNFNRSLSQACPPTGNDATLRPLDLVTPNSFDNNYYRNLVTSRGLLISDQVLFNADSTDSIVTEYVNNPATFAADFAAAMVKMSEIGVVTGTSGIVRTLCGNPS.

The N-terminal stretch at 1–30 is a signal peptide; sequence MSYHKSSGTTLMVPLFMLLISVNYFMSCNA. Pyrrolidone carboxylic acid is present on glutamine 31. Intrachain disulfides connect cysteine 41–cysteine 117, cysteine 74–cysteine 79, cysteine 123–cysteine 317, and cysteine 202–cysteine 228. The active-site Proton acceptor is histidine 72. 5 residues coordinate Ca(2+): aspartate 73, valine 76, glycine 78, aspartate 80, and serine 82. Proline 165 contacts substrate. Histidine 195 contributes to the heme b binding site. Position 196 (threonine 196) interacts with Ca(2+). N-linked (GlcNAc...) asparagine glycans are attached at residues asparagine 211 and asparagine 221. 3 residues coordinate Ca(2+): aspartate 241, threonine 244, and aspartate 249.

It belongs to the peroxidase family. Classical plant (class III) peroxidase subfamily. It depends on heme b as a cofactor. Ca(2+) serves as cofactor. Post-translationally, N-glycosylated. In terms of tissue distribution, expressed in tracheary elements, roots, young and old hypocotyls, and stems in the partially glycosylated form and in roots and young hypocotyls in the fully glycosylated form. None of the isoforms is significantly expressed in leaves or cotyledons.

It is found in the secreted. It carries out the reaction 2 a phenolic donor + H2O2 = 2 a phenolic radical donor + 2 H2O. Functionally, removal of H(2)O(2), oxidation of toxic reductants, biosynthesis and degradation of lignin, suberization, auxin catabolism, response to environmental stresses such as wounding, pathogen attack and oxidative stress. These functions might be dependent on each isozyme/isoform in each plant tissue. Involved in the synthesis of highly polymerized lignins. In Zinnia elegans (Garden zinnia), this protein is Basic peroxidase (POD3).